Reading from the N-terminus, the 320-residue chain is MGSSDETIFDLPPYIKVFKDGRVERLHSSPYVPPSLNDPETGGVSWKDVPISSVVSARIYLPKINNHDEKLPIIVYFHGAGFCLESAFKSFFHTYVKHFVAEAKAIAVSVEFRLAPENHLPAAYEDCWEALQWVASHVGLDISSLKTCIDKDPWIINYADFDRLYLWGDSTGANIVHNTLIRSGKEKLNGGKVKILGAILYYPYFLIRTSSKQSDYMENEYRSYWKLAYPDAPGGNDNPMINPTAENAPDLAGYGCSRLLISMVADEARDITLLYIDALEKSGWKGELDVADFDKQYFELFEMETEVAKNMLRRLASFIK.

An Involved in the stabilization of the negatively charged intermediate by the formation of the oxyanion hole motif is present at residues 78–80 (HGA). (-)-tabersonine is bound at residue G81. Catalysis depends on S170, which acts as the Proton acceptor. Residue D266 is part of the active site. Residue Y297 coordinates (-)-tabersonine. Residue Y297 is the Proton donor/acceptor of the active site.

This sequence belongs to the 'GDXG' lipolytic enzyme family. In terms of assembly, interacts with dehydroprecondylocarpine acetate synthase (DPAS). As to expression, expressed in leaf epidermis.

The protein resides in the cytoplasm. It localises to the cytosol. It is found in the nucleus. The catalysed reaction is dehydrosecodine = (-)-tabersonine. It carries out the reaction dihydroprecondylocarpine acetate = (-)-tabersonine + acetate + H(+). The protein operates within alkaloid biosynthesis. Functionally, component of iboga and aspidosperma monoterpenoid indole alkaloids (MIAs, e.g. tabersonine and catharanthine) biosynthesis pathway from 19E-geissoschizine, psychoactive compounds likely to be used in the treatment of opioid dependence. Catalyzes the conversion of dehydrosecodine to tabersonine, a precursor of vindoline; this process starts with the conversion of dihydroprecondylocarpine acetate to dehydrosecodine. The polypeptide is Tabersonine synthase (Catharanthus roseus (Madagascar periwinkle)).